Consider the following 432-residue polypeptide: Adenylosuccinate synthetase (432 aa).

GTP-binding positions include 12–18 and 40–42; these read GDEGKGK and GHT. The active-site Proton acceptor is the Asp13. Residues Asp13 and Gly40 each contribute to the Mg(2+) site. Residues 13 to 16, 38 to 41, Thr132, Arg146, Gln226, Thr241, and Arg305 each bind IMP; these read DEGK and NAGH. The Proton donor role is filled by His41. Position 301 to 307 (301 to 307) interacts with substrate; the sequence is VVTGRKR. GTP is bound by residues Arg307, 333–335, and 415–417; these read KLD and STS.

It belongs to the adenylosuccinate synthetase family. As to quaternary structure, homodimer. It depends on Mg(2+) as a cofactor.

The protein localises to the cytoplasm. It carries out the reaction IMP + L-aspartate + GTP = N(6)-(1,2-dicarboxyethyl)-AMP + GDP + phosphate + 2 H(+). It functions in the pathway purine metabolism; AMP biosynthesis via de novo pathway; AMP from IMP: step 1/2. Its function is as follows. Plays an important role in the de novo pathway of purine nucleotide biosynthesis. Catalyzes the first committed step in the biosynthesis of AMP from IMP. The protein is Adenylosuccinate synthetase of Mesorhizobium japonicum (strain LMG 29417 / CECT 9101 / MAFF 303099) (Mesorhizobium loti (strain MAFF 303099)).